A 64-amino-acid chain; its full sequence is Alpha-conotoxin Lt14.1 (64 aa).

A signal peptide spans methionine 1 to alanine 20. A propeptide spanning residues glycine 21–arginine 50 is cleaved from the precursor. Disulfide bonds link cysteine 52/cysteine 60 and cysteine 56/cysteine 63. Cysteine 63 is modified (cysteine amide).

This sequence belongs to the conotoxin L superfamily. Post-translationally, may contain a 4-hydroxyproline. In terms of tissue distribution, expressed by the venom duct.

It is found in the secreted. Its function is as follows. Alpha-conotoxins act on postsynaptic membranes, they bind to the nicotinic acetylcholine receptors (nAChR) and thus inhibit them. This synthetic peptide displays analgesic activity in a hot plate assay. Analgesia is also observed against second phase pain in formalin-induced inflammatory pain model, and in a rat model of mechanically-induced pain. Effects downstream of nAChR are inhibition of calcium influx, inhibition of ERK1/2 phosphorylation and inhibition of c-fos/NOS expression. Genes associated with drug dependence are not up-regulated by this toxin. Treatment with this toxin reversed morphine withdrawal symptoms in mice. In Conus litteratus (Lettered cone), this protein is Alpha-conotoxin Lt14.1.